A 739-amino-acid polypeptide reads, in one-letter code: POU domain, class 2, transcription factor 1 (739 aa).

Residues 1 to 11 (MNNPSETSKPS) are compositionally biased toward polar residues. Disordered regions lie at residues 1–39 (MNNP…GGPI), 67–95 (SLNV…SVQA), 253–277 (TPIQ…EEPS), 353–378 (DSTL…RRKK), and 489–553 (SVTG…SSPL). Residues 81 to 95 (SQQPSQPSQQPSVQA) are compositionally biased toward low complexity. Positions 274 to 348 (EEPSDLEELE…LLEKWLNDAE (75 aa)) constitute a POU-specific domain. Positions 353–364 (DSTLSSPSALNS) are enriched in low complexity. The homeobox DNA-binding region spans 375-434 (RRKKRTSIETNIRVALEKSFLENQKPTSEEITMIADQLNMEKEVIRVWFCNRRQKEKRIN). Positions 489–552 (SVTGTTETTS…QTTSTPLSSP (64 aa)) are enriched in low complexity.

This sequence belongs to the POU transcription factor family. Class-2 subfamily. As to quaternary structure, interacts with NR3C1, AR and PGR.

The protein resides in the nucleus. Its function is as follows. Transcription factor that binds to the octamer motif (5'-ATTTGCAT-3') and activates the promoters of the genes for some small nuclear RNAs (snRNA) and of genes such as those for histone H2B and immunoglobulins. Modulates transcription transactivation by NR3C1, AR and PGR. This is POU domain, class 2, transcription factor 1 (POU2F1) from Gallus gallus (Chicken).